A 159-amino-acid polypeptide reads, in one-letter code: Ribosomal RNA large subunit methyltransferase H (159 aa).

S-adenosyl-L-methionine-binding positions include Gly-108 and 127–132 (FSKMTF).

This sequence belongs to the RNA methyltransferase RlmH family. In terms of assembly, homodimer.

It is found in the cytoplasm. The enzyme catalyses pseudouridine(1915) in 23S rRNA + S-adenosyl-L-methionine = N(3)-methylpseudouridine(1915) in 23S rRNA + S-adenosyl-L-homocysteine + H(+). In terms of biological role, specifically methylates the pseudouridine at position 1915 (m3Psi1915) in 23S rRNA. This Clostridium beijerinckii (strain ATCC 51743 / NCIMB 8052) (Clostridium acetobutylicum) protein is Ribosomal RNA large subunit methyltransferase H.